We begin with the raw amino-acid sequence, 206 residues long: Pyridoxal 5'-phosphate synthase subunit PdxT (206 aa).

59 to 61 (GES) contacts L-glutamine. The active-site Nucleophile is C91. Residues R123 and 151-152 (IR) each bind L-glutamine. Residues H187 and E189 each act as charge relay system in the active site.

The protein belongs to the glutaminase PdxT/SNO family. As to quaternary structure, in the presence of PdxS, forms a dodecamer of heterodimers. Only shows activity in the heterodimer.

The enzyme catalyses aldehydo-D-ribose 5-phosphate + D-glyceraldehyde 3-phosphate + L-glutamine = pyridoxal 5'-phosphate + L-glutamate + phosphate + 3 H2O + H(+). It catalyses the reaction L-glutamine + H2O = L-glutamate + NH4(+). It functions in the pathway cofactor biosynthesis; pyridoxal 5'-phosphate biosynthesis. Functionally, catalyzes the hydrolysis of glutamine to glutamate and ammonia as part of the biosynthesis of pyridoxal 5'-phosphate. The resulting ammonia molecule is channeled to the active site of PdxS. In Mycobacterium sp. (strain KMS), this protein is Pyridoxal 5'-phosphate synthase subunit PdxT.